The chain runs to 507 residues: Cytochrome c-552 (507 aa).

An N-terminal signal peptide occupies residues 1–22 (MTKFKLLLAGSLVAIVSMGLLA). Heme c contacts are provided by His102, Cys130, Cys133, Lys134, Cys168, Cys171, His172, Cys211, Cys214, and His215. Glu217, Tyr218, Lys274, and Gln276 together coordinate Ca(2+). Tyr218 is a substrate binding site. A substrate-binding site is contributed by His277. Positions 288, 295, 298, 299, 313, 326, 329, 330, and 405 each coordinate heme c.

Belongs to the cytochrome c-552 family. Homodimer. Interacts with NrfH. May form a heterotetramer with NrfH. The cofactor is Ca(2+). Requires heme c as cofactor.

It is found in the periplasm. The enzyme catalyses 6 Fe(III)-[cytochrome c] + NH4(+) + 2 H2O = 6 Fe(II)-[cytochrome c] + nitrite + 8 H(+). The protein operates within nitrogen metabolism; nitrate reduction (assimilation). Functionally, catalyzes the reduction of nitrite to ammonia, consuming six electrons in the process. Has very low activity toward hydroxylamine, and even lower activity toward sulfite. Sulfite reductase activity is maximal at neutral pH. In Wolinella succinogenes (strain ATCC 29543 / DSM 1740 / CCUG 13145 / JCM 31913 / LMG 7466 / NCTC 11488 / FDC 602W) (Vibrio succinogenes), this protein is Cytochrome c-552 (nrfA).